A 3672-amino-acid polypeptide reads, in one-letter code: Laminin-like protein epi-1 (3672 aa).

An N-terminal signal peptide occupies residues 1–27 (MSPYDSSPWATKALFLIVTLLAQFTYS). Positions 28–297 (QVLTPSQITI…AIKEIMIGGR (270 aa)) constitute a Laminin N-terminal domain. Asn-121, Asn-140, and Asn-249 each carry an N-linked (GlcNAc...) asparagine glycan. 43 cysteine pairs are disulfide-bonded: Cys-298-Cys-307, Cys-300-Cys-320, Cys-322-Cys-331, Cys-334-Cys-354, Cys-357-Cys-366, Cys-359-Cys-391, Cys-394-Cys-403, Cys-406-Cys-424, Cys-427-Cys-438, Cys-429-Cys-445, Cys-447-Cys-456, Cys-459-Cys-469, Cys-472-Cys-484, Cys-474-Cys-491, Cys-493-Cys-502, Cys-505-Cys-516, Cys-519-Cys-531, Cys-521-Cys-538, Cys-540-Cys-549, Cys-552-Cys-561, Cys-564-Cys-576, Cys-566-Cys-583, Cys-585-Cys-594, Cys-597-Cys-607, Cys-610-Cys-622, Cys-612-Cys-629, Cys-631-Cys-640, Cys-643-Cys-653, Cys-656-Cys-668, Cys-658-Cys-674, Cys-676-Cys-685, Cys-688-Cys-698, Cys-701-Cys-715, Cys-703-Cys-724, Cys-726-Cys-735, Cys-738-Cys-753, Cys-756-Cys-770, Cys-758-Cys-777, Cys-779-Cys-788, Cys-791-Cys-806, Cys-809-Cys-821, Cys-811-Cys-828, and Cys-830-Cys-839. 10 Laminin EGF-like domains span residues 298–356 (CVCN…TCEA), 357–426 (CNCF…PCKV), 427–471 (CDCD…KCKP), 472–518 (CECN…GCVE), 519–563 (CVCD…DCKF), 564–609 (CNCD…NCKA), 610–655 (CACD…DCRG), 656–700 (CECL…ICEE), 701–755 (CNCN…GCRS), and 756–808 (CDCN…GCES). A glycan (N-linked (GlcNAc...) asparagine) is linked at Asn-351. The N-linked (GlcNAc...) asparagine glycan is linked to Asn-477. Asn-511 and Asn-530 each carry an N-linked (GlcNAc...) asparagine glycan. A glycan (N-linked (GlcNAc...) asparagine) is linked at Asn-634. Asn-761 carries N-linked (GlcNAc...) asparagine glycosylation. The Laminin EGF-like 11; truncated domain maps to 809-839 (CHCDIGGALRAECDITSGQCKCRPRVTGLRC). Asn-1014 and Asn-1341 each carry an N-linked (GlcNAc...) asparagine glycan. Intrachain disulfides connect Cys-1415–Cys-1427, Cys-1417–Cys-1434, Cys-1436–Cys-1445, Cys-1448–Cys-1458, Cys-1461–Cys-1469, Cys-1463–Cys-1476, Cys-1478–Cys-1487, Cys-1490–Cys-1503, Cys-1506–Cys-1520, Cys-1508–Cys-1527, Cys-1529–Cys-1538, Cys-1541–Cys-1551, Cys-1554–Cys-1566, Cys-1556–Cys-1573, Cys-1575–Cys-1584, and Cys-1587–Cys-1602. 4 Laminin EGF-like domains span residues 1415–1460 (CDCV…ECIK), 1461–1505 (CQCN…GCQK), 1506–1553 (CGCH…HCYG), and 1554–1604 (CSCN…GCVN). The region spanning 1605–1614 (CFCFGVTDSC) is the Laminin EGF-like 16; first part domain. Residues 1615–1796 (RSSMYPVTIM…SVIKASSVEQ (182 aa)) enclose the Laminin IV type A domain. N-linked (GlcNAc...) asparagine glycans are attached at residues Asn-1705 and Asn-1756. The 33-residue stretch at 1797-1829 (CQCPAPYTGPSCQLCASGYHRVQSGSFLGACVP) folds into the Laminin EGF-like 16; second part domain. Cystine bridges form between Cys-1830-Cys-1839, Cys-1832-Cys-1846, Cys-1849-Cys-1858, Cys-1861-Cys-1877, Cys-1880-Cys-1894, Cys-1882-Cys-1905, Cys-1907-Cys-1916, Cys-1919-Cys-1934, Cys-1937-Cys-1951, Cys-1939-Cys-1958, Cys-1961-Cys-1970, Cys-1973-Cys-1987, Cys-1990-Cys-2000, Cys-1992-Cys-2007, Cys-2009-Cys-2018, Cys-2021-Cys-2031, Cys-2037-Cys-2048, Cys-2039-Cys-2055, Cys-2057-Cys-2066, Cys-2069-Cys-2081, Cys-2084-Cys-2096, Cys-2086-Cys-2103, Cys-2105-Cys-2114, and Cys-2117-Cys-2129. 6 consecutive Laminin EGF-like domains span residues 1830-1879 (CECN…DCMA), 1880-1936 (CACP…SCSP), 1937-1989 (CQCN…NCSS), 1990-2036 (CECS…GCQG), 2037-2083 (CHCG…GCDK), and 2084-2131 (CDCE…GCRR). N-linked (GlcNAc...) asparagine glycosylation is present at Asn-1868. Asn-1944 is a glycosylation site (N-linked (GlcNAc...) asparagine). A glycan (N-linked (GlcNAc...) asparagine) is linked at Asn-1986. The N-linked (GlcNAc...) asparagine glycan is linked to Asn-2002. Residues Asn-2159, Asn-2207, Asn-2231, Asn-2235, Asn-2401, Asn-2421, Asn-2487, and Asn-2821 are each glycosylated (N-linked (GlcNAc...) asparagine). Laminin G-like domains are found at residues 2693 to 2884 (GAHF…VNGA), 2896 to 3066 (ELVV…RSGC), and 3072 to 3235 (RTVS…LNGC). A disulfide bridge connects residues Cys-3040 and Cys-3066. N-linked (GlcNAc...) asparagine glycosylation occurs at Asn-3087. Cysteines 3209 and 3235 form a disulfide. Positions 3236–3294 (SLSDDENISTTTTAAPKPTDDSDVAVLPIDEEEESTTTTTTTTTEEPTEEPAEARPDGH) are disordered. N-linked (GlcNAc...) asparagine glycosylation is present at Asn-3242. A compositionally biased stretch (low complexity) spans 3271 to 3280 (TTTTTTTTTE). Laminin G-like domains lie at 3310–3482 (GFNF…TEQC) and 3488–3669 (PGMY…RNAC). A disulfide bridge connects residues Cys-3460 and Cys-3482. The N-linked (GlcNAc...) asparagine glycan is linked to Asn-3541. The cysteines at positions 3633 and 3669 are disulfide-linked.

Laminin is a complex glycoprotein, consisting of three different polypeptide chains (alpha, beta, gamma), which are bound to each other by disulfide bonds into a cross-shaped molecule comprising one long and three short arms with globules at each end.

The protein resides in the secreted. Its subcellular location is the extracellular space. It is found in the extracellular matrix. The protein localises to the basement membrane. Its function is as follows. Binding to cells via a high affinity receptor, laminin is thought to mediate the attachment, migration and organization of cells into tissues during embryonic development by interacting with other extracellular matrix components. Required to assemble a stable basement membrane and for organizing receptor complexes and cytoskeletal components to the proper cell surfaces. During embryogenesis, does not require the presence of collagen type IV in order to associate with cell surfaces, prior to assembly of the prototypical basement membrane. During the formation of neuromuscular junctions at the larval stage, negatively regulates membrane protrusion from body wall muscles, probably downstream of the integrin complex formed by pat-2 and pat-3. Probably plays a distinct role from the related laminin subunit alpha lam-3. This chain is Laminin-like protein epi-1 (epi-1), found in Caenorhabditis elegans.